The primary structure comprises 308 residues: Glutaminase (308 aa).

The substrate site is built by serine 66, asparagine 117, glutamate 161, asparagine 168, tyrosine 192, tyrosine 244, and valine 262.

This sequence belongs to the glutaminase family. In terms of assembly, homotetramer.

It carries out the reaction L-glutamine + H2O = L-glutamate + NH4(+). The sequence is that of Glutaminase from Shigella dysenteriae serotype 1 (strain Sd197).